The following is a 732-amino-acid chain: MDTKVDNAGKCPVVHTHTAHGGRSNRDWWPNQLNLRILHQNSSLSNPLGTAFNYAEEFKKLDLEALKKDLFALMTDSQEWWPADFGHYGPLFIRMAWHSAGTYRTGDGRGGAGAGQQRFAPLNSWPDNVNLDKARRLLWPIKQKYGNQISWADLLVLTGNVALESMGFKTFGFAGGRADVWEPAEDVYWGSEDTWLGDKRYSGDRDLEKPLSAVQMGLIYVNPEGPNGNPDPLAAARDIRETFARMAMNDEETVALIAGGHTFGKTHGAGDAAHVGADPEAGDIEEQGFGWKSSYGTGKGGDTISSGLEVIWTTTPTKWSNNFFENLFGFEWELTKSPAGAHQWTPKNGAGAGIVPDAHDPSKRHAPSMLTTDLSLRFDPAYEKISRRFFENPDQFADAFARAWFKLTHRDMGPRVLYLGPEVPSEELIWQDPIPAVDHLLIDAKDIADLKEKILASGLPISQLVSTAWASAATFRGSDKRGGANGARIRLAPQKDWEVNQPTQLATVLATLEGIQKAFNDAQLSGKKVSLADLIVLAGSAAVEKAAKNAGHDIEVPFAPGRTDATQEQTDVESFAVLEPIADGFRNYQKGEYTISPEELLIDKAQLLTLTAPELTVLVGGLRVLNANTGQSQHGVFTKRPETLTNDFFVNLLDMGTAWKVSPDSKYVFEGRDRDTNEIKWTGTRIDLVFGSNSQLRALAEVYGQGDTQEKFVRDFVAAWTKVMNADRFDLA.

Residues 1-45 form the signal peptide; sequence MDTKVDNAGKCPVVHTHTAHGGRSNRDWWPNQLNLRILHQNSSLS. The tryptophyl-tyrosyl-methioninium (Trp-Tyr) (with M-246) cross-link spans 97–220; it reads WHSAGTYRTG…LSAVQMGLIY (124 aa). The active-site Proton acceptor is the histidine 98. A cross-link (tryptophyl-tyrosyl-methioninium (Tyr-Met) (with W-97)) is located at residues 220 to 246; the sequence is YVNPEGPNGNPDPLAAARDIRETFARM. Histidine 261 provides a ligand contact to heme b.

It belongs to the peroxidase family. Peroxidase/catalase subfamily. Homodimer or homotetramer. The cofactor is heme b. Post-translationally, formation of the three residue Trp-Tyr-Met cross-link is important for the catalase, but not the peroxidase activity of the enzyme.

The catalysed reaction is H2O2 + AH2 = A + 2 H2O. It catalyses the reaction 2 H2O2 = O2 + 2 H2O. In terms of biological role, bifunctional enzyme with both catalase and broad-spectrum peroxidase activity. The sequence is that of Catalase-peroxidase from Rhizobium rhizogenes (strain K84 / ATCC BAA-868) (Agrobacterium radiobacter).